A 229-amino-acid chain; its full sequence is uncharacterized protein (229 aa).

This is an uncharacterized protein from Treponema pallidum (strain Nichols).